The following is a 458-amino-acid chain: Argininosuccinate lyase (458 aa).

Belongs to the lyase 1 family. Argininosuccinate lyase subfamily.

It localises to the cytoplasm. It carries out the reaction 2-(N(omega)-L-arginino)succinate = fumarate + L-arginine. Its pathway is amino-acid biosynthesis; L-arginine biosynthesis; L-arginine from L-ornithine and carbamoyl phosphate: step 3/3. The sequence is that of Argininosuccinate lyase from Geotalea daltonii (strain DSM 22248 / JCM 15807 / FRC-32) (Geobacter daltonii).